Here is a 224-residue protein sequence, read N- to C-terminus: 4'-phosphopantetheinyl transferase Sfp (224 aa).

Mg(2+)-binding residues include aspartate 107, glutamate 109, and glutamate 151. The segment at 158–189 is peptidyl carrier protein binding; sequence GKGLSLPLDSFSVRLHQDGQVSIELPDSHSPC.

This sequence belongs to the P-Pant transferase superfamily. Gsp/Sfp/HetI/AcpT family. Monomer in solution. Mg(2+) serves as cofactor.

It carries out the reaction apo-[ACP] + CoA = holo-[ACP] + adenosine 3',5'-bisphosphate + H(+). Functionally, activates the seven peptidyl carrier protein (PCP) domains of the first three subunits (SrfAA, SrfAB and SrfAC) of surfactin synthetase by transferring the 4'-phosphopantetheinyl moiety of coenzyme A (CoA) to a serine residue. Required for cells of B.subtilis to become producers of the lipopeptide antibiotics surfactin and plipastatin B1. The protein is 4'-phosphopantetheinyl transferase Sfp (sfp) of Bacillus subtilis (strain 168).